The chain runs to 306 residues: Protein SEC13 homolog (306 aa).

6 WD repeats span residues 11–50 (QHRDAIHDAQLNIYGNRLATCGSDRLVKIFEVRPNGQSYP), 56–97 (GHNG…WQKT), 102–143 (THEA…QQWQ), 150–195 (CHDQ…NEWT), 202–245 (CHKD…TAEW), and 252–291 (QAPCALYHASFSPCGSFLSVSGDDNMITLWRENLQGQWIK).

The protein belongs to the WD repeat SEC13 family. Probably part of the GATOR complex.

The protein localises to the cytoplasmic vesicle. It localises to the COPII-coated vesicle membrane. The protein resides in the endoplasmic reticulum membrane. Its subcellular location is the nucleus. It is found in the nuclear pore complex. The protein localises to the lysosome membrane. In terms of biological role, functions as a component of the nuclear pore complex (NPC) and the COPII coat. As a component of the GATOR complex may function in the amino acid-sensing branch of the TORC1 signaling pathway. This chain is Protein SEC13 homolog, found in Caenorhabditis briggsae.